A 348-amino-acid chain; its full sequence is Beta-hexosaminidase (348 aa).

Residues D64, R72, R138, and 168-169 (KH) contribute to the substrate site. The active-site Proton donor/acceptor is the H181. D252 (nucleophile) is an active-site residue.

Belongs to the glycosyl hydrolase 3 family. NagZ subfamily.

It localises to the cytoplasm. The enzyme catalyses Hydrolysis of terminal non-reducing N-acetyl-D-hexosamine residues in N-acetyl-beta-D-hexosaminides.. The protein operates within cell wall biogenesis; peptidoglycan recycling. Functionally, plays a role in peptidoglycan recycling by cleaving the terminal beta-1,4-linked N-acetylglucosamine (GlcNAc) from peptide-linked peptidoglycan fragments, giving rise to free GlcNAc, anhydro-N-acetylmuramic acid and anhydro-N-acetylmuramic acid-linked peptides. The sequence is that of Beta-hexosaminidase from Nitrosomonas eutropha (strain DSM 101675 / C91 / Nm57).